Reading from the N-terminus, the 736-residue chain is Phosphoribosylformylglycinamidine synthase subunit PurL (736 aa).

Residue His-49 is part of the active site. The ATP site is built by Tyr-52 and Lys-91. Position 93 (Glu-93) interacts with Mg(2+). Residues 94–97 (SHNH) and Arg-116 each bind substrate. His-95 serves as the catalytic Proton acceptor. A Mg(2+)-binding site is contributed by Asp-117. Residue Gln-240 participates in substrate binding. Residue Asp-268 coordinates Mg(2+). 312–314 (ESQ) contacts substrate. ATP is bound by residues Asp-493 and Gly-530. Asn-531 lines the Mg(2+) pocket. Ser-533 serves as a coordination point for substrate.

The protein belongs to the FGAMS family. In terms of assembly, monomer. Part of the FGAM synthase complex composed of 1 PurL, 1 PurQ and 2 PurS subunits.

It localises to the cytoplasm. It catalyses the reaction N(2)-formyl-N(1)-(5-phospho-beta-D-ribosyl)glycinamide + L-glutamine + ATP + H2O = 2-formamido-N(1)-(5-O-phospho-beta-D-ribosyl)acetamidine + L-glutamate + ADP + phosphate + H(+). Its pathway is purine metabolism; IMP biosynthesis via de novo pathway; 5-amino-1-(5-phospho-D-ribosyl)imidazole from N(2)-formyl-N(1)-(5-phospho-D-ribosyl)glycinamide: step 1/2. In terms of biological role, part of the phosphoribosylformylglycinamidine synthase complex involved in the purines biosynthetic pathway. Catalyzes the ATP-dependent conversion of formylglycinamide ribonucleotide (FGAR) and glutamine to yield formylglycinamidine ribonucleotide (FGAM) and glutamate. The FGAM synthase complex is composed of three subunits. PurQ produces an ammonia molecule by converting glutamine to glutamate. PurL transfers the ammonia molecule to FGAR to form FGAM in an ATP-dependent manner. PurS interacts with PurQ and PurL and is thought to assist in the transfer of the ammonia molecule from PurQ to PurL. The polypeptide is Phosphoribosylformylglycinamidine synthase subunit PurL (Rhodopseudomonas palustris (strain HaA2)).